The following is a 125-amino-acid chain: Large ribosomal subunit protein bL20 (125 aa).

It belongs to the bacterial ribosomal protein bL20 family.

In terms of biological role, binds directly to 23S ribosomal RNA and is necessary for the in vitro assembly process of the 50S ribosomal subunit. It is not involved in the protein synthesizing functions of that subunit. The sequence is that of Large ribosomal subunit protein bL20 from Rhizorhabdus wittichii (strain DSM 6014 / CCUG 31198 / JCM 15750 / NBRC 105917 / EY 4224 / RW1) (Sphingomonas wittichii).